The chain runs to 104 residues: Ribonuclease P protein component 4 (104 aa).

Zn(2+) is bound by residues Cys57, Cys60, Cys83, and Cys86.

This sequence belongs to the eukaryotic/archaeal RNase P protein component 4 family. As to quaternary structure, consists of a catalytic RNA component and at least 4-5 protein subunits. It depends on Zn(2+) as a cofactor.

The protein resides in the cytoplasm. It catalyses the reaction Endonucleolytic cleavage of RNA, removing 5'-extranucleotides from tRNA precursor.. Its function is as follows. Part of ribonuclease P, a protein complex that generates mature tRNA molecules by cleaving their 5'-ends. In Saccharolobus islandicus (strain L.S.2.15 / Lassen #1) (Sulfolobus islandicus), this protein is Ribonuclease P protein component 4.